Consider the following 809-residue polypeptide: Glycerol-3-phosphate acyltransferase (809 aa).

An HXXXXD motif motif is present at residues 306 to 311 (HRSHMD).

The protein belongs to the GPAT/DAPAT family.

It localises to the cell inner membrane. It carries out the reaction sn-glycerol 3-phosphate + an acyl-CoA = a 1-acyl-sn-glycero-3-phosphate + CoA. It functions in the pathway phospholipid metabolism; CDP-diacylglycerol biosynthesis; CDP-diacylglycerol from sn-glycerol 3-phosphate: step 1/3. The chain is Glycerol-3-phosphate acyltransferase from Vibrio vulnificus (strain YJ016).